Consider the following 303-residue polypeptide: 4-hydroxy-3-methylbut-2-enyl diphosphate reductase (303 aa).

Cys-12 serves as a coordination point for [4Fe-4S] cluster. (2E)-4-hydroxy-3-methylbut-2-enyl diphosphate-binding residues include His-42 and His-75. Dimethylallyl diphosphate is bound by residues His-42 and His-75. 2 residues coordinate isopentenyl diphosphate: His-42 and His-75. Cys-97 is a binding site for [4Fe-4S] cluster. Residue His-125 coordinates (2E)-4-hydroxy-3-methylbut-2-enyl diphosphate. His-125 contacts dimethylallyl diphosphate. His-125 contacts isopentenyl diphosphate. Residue Glu-127 is the Proton donor of the active site. Residue Ser-164 coordinates (2E)-4-hydroxy-3-methylbut-2-enyl diphosphate. Residue Cys-192 coordinates [4Fe-4S] cluster. Residues Ser-220, Ser-221, Asn-222, and Ser-264 each contribute to the (2E)-4-hydroxy-3-methylbut-2-enyl diphosphate site. Positions 220, 221, 222, and 264 each coordinate dimethylallyl diphosphate. 4 residues coordinate isopentenyl diphosphate: Ser-220, Ser-221, Asn-222, and Ser-264.

This sequence belongs to the IspH family. The cofactor is [4Fe-4S] cluster.

The enzyme catalyses isopentenyl diphosphate + 2 oxidized [2Fe-2S]-[ferredoxin] + H2O = (2E)-4-hydroxy-3-methylbut-2-enyl diphosphate + 2 reduced [2Fe-2S]-[ferredoxin] + 2 H(+). The catalysed reaction is dimethylallyl diphosphate + 2 oxidized [2Fe-2S]-[ferredoxin] + H2O = (2E)-4-hydroxy-3-methylbut-2-enyl diphosphate + 2 reduced [2Fe-2S]-[ferredoxin] + 2 H(+). The protein operates within isoprenoid biosynthesis; dimethylallyl diphosphate biosynthesis; dimethylallyl diphosphate from (2E)-4-hydroxy-3-methylbutenyl diphosphate: step 1/1. It participates in isoprenoid biosynthesis; isopentenyl diphosphate biosynthesis via DXP pathway; isopentenyl diphosphate from 1-deoxy-D-xylulose 5-phosphate: step 6/6. Catalyzes the conversion of 1-hydroxy-2-methyl-2-(E)-butenyl 4-diphosphate (HMBPP) into a mixture of isopentenyl diphosphate (IPP) and dimethylallyl diphosphate (DMAPP). Acts in the terminal step of the DOXP/MEP pathway for isoprenoid precursor biosynthesis. The protein is 4-hydroxy-3-methylbut-2-enyl diphosphate reductase of Neorickettsia sennetsu (strain ATCC VR-367 / Miyayama) (Ehrlichia sennetsu).